Reading from the N-terminus, the 138-residue chain is ATP synthase epsilon chain (138 aa).

It belongs to the ATPase epsilon chain family. As to quaternary structure, F-type ATPases have 2 components, CF(1) - the catalytic core - and CF(0) - the membrane proton channel. CF(1) has five subunits: alpha(3), beta(3), gamma(1), delta(1), epsilon(1). CF(0) has three main subunits: a, b and c.

It localises to the cell membrane. Its function is as follows. Produces ATP from ADP in the presence of a proton gradient across the membrane. The chain is ATP synthase epsilon chain from Streptococcus uberis (strain ATCC BAA-854 / 0140J).